The sequence spans 1838 residues: Collagen alpha-1(V) chain (1838 aa).

An N-terminal signal peptide occupies residues 1–37 (MDVHTRWKARSALRPGAPLLPPLLLLLLWAPPPSRAA). Positions 72–244 (DVAYRVTKDA…DYCEHYSPDC (173 aa)) constitute a Laminin G-like domain. Residues 231-443 (RAAYDYCEHY…MPANQDTIYE (213 aa)) form a nonhelical region region. Sulfotyrosine is present on residues Tyr-234, Tyr-236, Tyr-240, Tyr-262, and Tyr-263. Disordered stretches follow at residues 242–269 (PDCD…GDGE), 281–457 (EDPE…QKGE), 470–520 (PPGP…GTML), 526–545 (FGGG…QESQ), and 559–1574 (GPAG…EVIQ). Residues 258-269 (NPDEYYTEGDGE) show a composition bias toward acidic residues. Basic and acidic residues predominate over residues 285-304 (DLGKEPTPSKKPVEAAKETT). Residues 309 to 323 (ELTPTPTEAAPMPET) are compositionally biased toward low complexity. Residues Tyr-338, Tyr-340, Tyr-346, and Tyr-347 each carry the sulfotyrosine modification. Residues 377 to 388 (PTSTADTSNSSN) show a composition bias toward polar residues. The span at 396–406 (GADDLEGEFTE) shows a compositional bias: acidic residues. 4 positions are modified to sulfotyrosine: Tyr-416, Tyr-417, Tyr-420, and Tyr-421. Residues 417 to 428 (YDPYYDPTSSPS) are compositionally biased toward low complexity. The tract at residues 444–558 (GIGGPRGEKG…ILQQARLALR (115 aa)) is interrupted collagenous region. The segment covering 470–485 (PPGPEGPAGLPGPPGT) has biased composition (pro residues). Positions 506 to 520 (LPGADGLPGPPGTML) are enriched in low complexity. The tract at residues 559 to 1570 (GPAGPMGLTG…GPPGPPGPPG (1012 aa)) is triple-helical region. Hydroxyproline is present on residues Pro-570 and Pro-576. Positions 587-597 (DVGPQGPRGVQ) are enriched in low complexity. Pro-621 carries the hydroxyproline modification. Lys-627 is subject to 5-hydroxylysine. Pro-639 is subject to Hydroxyproline. The residue at position 642 (Lys-642) is a 5-hydroxylysine. Residues Pro-648, Pro-654, Pro-657, Pro-675, and Pro-678 each carry the hydroxyproline modification. Positions 671–686 (PRGLPGEPGPRGLLGP) are enriched in low complexity. Lys-687 bears the 5-hydroxylysine mark. Residues 687 to 696 (KGPPGPPGPP) are compositionally biased toward pro residues. A hydroxyproline mark is found at Pro-690, Pro-696, and Pro-705. At Lys-708 the chain carries 5-hydroxylysine. Hydroxyproline is present on residues Pro-717, Pro-720, Pro-726, and Pro-732. Over residues 722–741 (QQGNPGAQGLPGPQGAIGPP) the composition is skewed to low complexity. Residue Lys-744 is modified to 5-hydroxylysine. Positions 747–756 (LGKPGLPGMP) are enriched in low complexity. A hydroxyproline mark is found at Pro-750, Pro-756, Pro-762, Pro-765, and Pro-771. Lys-774 carries the post-translational modification 5-hydroxylysine. Pro-780 and Pro-789 each carry hydroxyproline. 5-hydroxylysine is present on residues Lys-795, Lys-804, Lys-807, and Lys-810. Pro-816 is subject to Hydroxyproline. At Lys-819 the chain carries 5-hydroxylysine. Hydroxyproline is present on Pro-834. Positions 837 to 846 (RGEDGPEGPK) are enriched in basic and acidic residues. At Lys-846 the chain carries 5-hydroxylysine. Pro-861 bears the Hydroxyproline mark. The residue at position 864 (Lys-864) is a 5-hydroxylysine. Over residues 867–876 (LGVPGLPGYP) the composition is skewed to low complexity. A hydroxyproline mark is found at Pro-870, Pro-873, and Pro-876. Lys-882 bears the 5-hydroxylysine mark. A hydroxyproline mark is found at Pro-888 and Pro-891. Lys-897 carries the 5-hydroxylysine modification. Residues Pro-903 and Pro-906 each carry the hydroxyproline modification. Over residues 908-917 (PRGQRGPTGP) the composition is skewed to low complexity. A hydroxyproline mark is found at Pro-930 and Pro-945. 2 stretches are compositionally biased toward low complexity: residues 971 to 990 (KDGL…QGKT) and 999 to 1011 (VGPQ…TGPM). Hydroxyproline occurs at positions 1017, 1020, 1023, and 1029. Residues 1088-1104 (SPGERGPAGAAGPIGIP) are compositionally biased toward low complexity. A compositionally biased stretch (pro residues) spans 1106–1115 (RPGPQGPPGP). Low complexity predominate over residues 1116 to 1140 (AGEKGAPGEKGPQGPAGRDGLQGPV). Pro-1221 and Pro-1224 each carry hydroxyproline. A compositionally biased stretch (low complexity) spans 1259-1268 (PSGAPGADGP). 2 stretches are compositionally biased toward pro residues: residues 1380–1398 (TGEP…PGPA) and 1454–1469 (SPGP…PPGL). Residues Pro-1467 and Pro-1470 each carry the hydroxyproline modification. Positions 1485–1494 (PGLIGLIGPP) are enriched in low complexity. The span at 1526–1541 (PIGPPGPPGLPGPPGP) shows a compositional bias: pro residues. Residues 1542–1554 (KGAKGSSGPTGPK) are compositionally biased toward low complexity. Positions 1560 to 1569 (PGPPGPPGPP) are enriched in pro residues. The interval 1571–1605 (EVIQPLPIQASRTRRNIDASQLLDDGNGENYVDYA) is nonhelical region. Tyr-1601 and Tyr-1604 each carry sulfotyrosine. Positions 1606–1838 (DGMEEIFGSL…FEVGPACFMG (233 aa)) are cleaved as a propeptide — C-terminal propeptide. The 229-residue stretch at 1609-1837 (EEIFGSLNSL…GFEVGPACFM (229 aa)) folds into the Fibrillar collagen NC1 domain. Intrachain disulfides connect Cys-1639/Cys-1671, Cys-1680/Cys-1835, and Cys-1746/Cys-1789. 5 residues coordinate Ca(2+): Asp-1657, Asn-1659, Gln-1660, Cys-1662, and Asp-1665.

This sequence belongs to the fibrillar collagen family. As to quaternary structure, trimers of two alpha 1(V) and one alpha 2(V) chains in most tissues and trimers of one alpha 1(V), one alpha 2(V), and one alpha 3(V) chains in placenta. Interacts with CSPG4. Post-translationally, prolines at the third position of the tripeptide repeating unit (G-X-Y) are hydroxylated in some or all of the chains. Sulfated on 40% of tyrosines.

Its subcellular location is the secreted. The protein resides in the extracellular space. It is found in the extracellular matrix. In terms of biological role, type V collagen is a member of group I collagen (fibrillar forming collagen). It is a minor connective tissue component of nearly ubiquitous distribution. Type V collagen binds to DNA, heparan sulfate, thrombospondin, heparin, and insulin. The chain is Collagen alpha-1(V) chain (COL5A1) from Homo sapiens (Human).